We begin with the raw amino-acid sequence, 247 residues long: uncharacterized protein (247 aa).

2 consecutive transmembrane segments (helical) span residues 9-29 and 37-57; these read IIAI…FLIF and SYFL…SLII.

It localises to the cell membrane. This is an uncharacterized protein from Methanocaldococcus jannaschii (strain ATCC 43067 / DSM 2661 / JAL-1 / JCM 10045 / NBRC 100440) (Methanococcus jannaschii).